The chain runs to 117 residues: uncharacterized protein (117 aa).

Positions methionine 1 to serine 20 are cleaved as a signal peptide.

This is an uncharacterized protein from Saccharomyces cerevisiae (strain ATCC 204508 / S288c) (Baker's yeast).